Here is a 368-residue protein sequence, read N- to C-terminus: MEKRDYYEVLGVARDASAAEIKRAYRKLARTYHPDVNKEADADQKFKELSEAYEVLSDDNQRARYDQFGHQDPSQGGGGFGGAEGFGDIFDMFFGGGRRQDPNAPRKGQDLQYVEEIDFMEAFSGVEKVITIPVEEDCGTCHGSGAKPGTHPETCKRCGGSGHINVEQNTMFGRVVNQTTCSTCHGRGQIVKEPCETCRGAGRVRKNKDVRVKIPAGIDNGQQIRLAGKGEAGVNGGPFGDLYVVVRVREHELFERVDDHIVMDMPLTFAQATLGDEIEVPTVHGKVSLKIPAGTQTGSRFRLRGKGMPNVRSGHHGDQYVNVVIITPKNLTDRQKELLREFNEISDEKGVEEQHEGVFSRIKTFFTG.

A J domain is found at 5–69; that stretch reads DYYEVLGVAR…NQRARYDQFG (65 aa). The CR-type zinc-finger motif lies at 125-207; sequence GVEKVITIPV…CRGAGRVRKN (83 aa). Zn(2+) contacts are provided by C138, C141, C155, C158, C181, C184, C195, and C198. 4 CXXCXGXG motif repeats span residues 138-145, 155-162, 181-188, and 195-202; these read CGTCHGSG, CKRCGGSG, CSTCHGRG, and CETCRGAG.

It belongs to the DnaJ family. In terms of assembly, homodimer. It depends on Zn(2+) as a cofactor.

It is found in the cytoplasm. In terms of biological role, participates actively in the response to hyperosmotic and heat shock by preventing the aggregation of stress-denatured proteins and by disaggregating proteins, also in an autonomous, DnaK-independent fashion. Unfolded proteins bind initially to DnaJ; upon interaction with the DnaJ-bound protein, DnaK hydrolyzes its bound ATP, resulting in the formation of a stable complex. GrpE releases ADP from DnaK; ATP binding to DnaK triggers the release of the substrate protein, thus completing the reaction cycle. Several rounds of ATP-dependent interactions between DnaJ, DnaK and GrpE are required for fully efficient folding. Also involved, together with DnaK and GrpE, in the DNA replication of plasmids through activation of initiation proteins. This is Chaperone protein DnaJ from Exiguobacterium sibiricum (strain DSM 17290 / CCUG 55495 / CIP 109462 / JCM 13490 / 255-15).